A 132-amino-acid chain; its full sequence is Small ribosomal subunit protein uS11 (132 aa).

Belongs to the universal ribosomal protein uS11 family. As to quaternary structure, part of the 30S ribosomal subunit. Interacts with proteins S7 and S18. Binds to IF-3.

Its function is as follows. Located on the platform of the 30S subunit, it bridges several disparate RNA helices of the 16S rRNA. Forms part of the Shine-Dalgarno cleft in the 70S ribosome. This Chlamydia trachomatis serovar L2 (strain ATCC VR-902B / DSM 19102 / 434/Bu) protein is Small ribosomal subunit protein uS11.